Consider the following 513-residue polypeptide: Prostaglandin E2 receptor EP4 subtype (513 aa).

The Extracellular segment spans residues 1-44 (MAEVGGTIPRSNRELQRCVLLTTTIMSIPGVNASFSSTPERLNS). A glycan (N-linked (GlcNAc...) asparagine) is linked at asparagine 32. The chain crosses the membrane as a helical span at residues 45 to 68 (PVTIPAVMFIFGVVGNLVAIVVLC). Residues 69-80 (KSRKEQKETTFY) are Cytoplasmic-facing. A helical transmembrane segment spans residues 81 to 104 (TLVCGLAVTDLLGTLLVSPVTIAT). The Extracellular segment spans residues 105 to 121 (YMKGQWPGDQALCDYST). An intrachain disulfide couples cysteine 117 to cysteine 195. Residues 122 to 140 (FILLFFGLSGLSIICAMSI) traverse the membrane as a helical segment. At 141 to 160 (ERYLAINHAYFYSHYVDKRL) the chain is on the cytoplasmic side. Residues 161-185 (AGLTLFAIYASNVLFCALPNMGLGR) form a helical membrane-spanning segment. The Extracellular portion of the chain corresponds to 186-209 (SERQYPGTWCFIDWTTNVTAYAAF). Residues 210 to 236 (SYMYAGFSSFLILATVLCNVLVCGALL) traverse the membrane as a helical segment. Over 237 to 295 (RMHRQFMRRTSLGTEQHHAAAAAAVASVACRGHAGASPALQRLSDFRRRRSFRRIAGAE) the chain is Cytoplasmic. Residues 296–323 (IQMVILLIATSLVVLICSIPLVVRVFIN) form a helical membrane-spanning segment. Over 324–340 (QLYQPNVVKDISRNPDL) the chain is Extracellular. A helical transmembrane segment spans residues 341-360 (QAIRIASVNPILDPWIYILL). Residues 361–513 (RKTVLSKAIE…ETLKLSEKCI (153 aa)) are Cytoplasmic-facing. The segment at 383–403 (GRDSSAQHCSESRRTSSAMSG) is disordered. The segment covering 384 to 403 (RDSSAQHCSESRRTSSAMSG) has biased composition (polar residues). 3 positions are modified to phosphoserine: serine 402, serine 405, and serine 407.

Belongs to the G-protein coupled receptor 1 family. Interacts with FEM1A. In terms of processing, phosphorylation mediates agonist-mediated desensitization by promoting cytoplasmic retention. As to expression, abundant expression in ileum, thymus and mastocytoma P-815 cells. Also observed in lung, spleen, heart and uterus.

The protein localises to the cell membrane. Receptor for prostaglandin E2 (PGE2). The activity of this receptor is mediated by G(s) proteins that stimulate adenylate cyclase. Has a relaxing effect on smooth muscle. May play an important role in regulating renal hemodynamics, intestinal epithelial transport, adrenal aldosterone secretion, and uterine function. The polypeptide is Prostaglandin E2 receptor EP4 subtype (Ptger4) (Mus musculus (Mouse)).